The primary structure comprises 201 residues: NADH-quinone oxidoreductase subunit I (201 aa).

4Fe-4S ferredoxin-type domains follow at residues 78-107 and 116-147; these read MSYE…RIEA and KVVR…MTDI. [4Fe-4S] cluster contacts are provided by C87, C90, C93, C97, C127, C130, C133, and C137.

Belongs to the complex I 23 kDa subunit family. As to quaternary structure, NDH-1 is composed of 14 different subunits. Subunits NuoA, H, J, K, L, M, N constitute the membrane sector of the complex. Requires [4Fe-4S] cluster as cofactor.

Its subcellular location is the cell inner membrane. The enzyme catalyses a quinone + NADH + 5 H(+)(in) = a quinol + NAD(+) + 4 H(+)(out). Functionally, NDH-1 shuttles electrons from NADH, via FMN and iron-sulfur (Fe-S) centers, to quinones in the respiratory chain. The immediate electron acceptor for the enzyme in this species is believed to be ubiquinone. Couples the redox reaction to proton translocation (for every two electrons transferred, four hydrogen ions are translocated across the cytoplasmic membrane), and thus conserves the redox energy in a proton gradient. The sequence is that of NADH-quinone oxidoreductase subunit I from Aquifex aeolicus (strain VF5).